A 387-amino-acid chain; its full sequence is Protein arginine N-methyltransferase 1 (387 aa).

The interval 1 to 60 is disordered; that stretch reads MDQRKGSGSDANGGLAEATASRLRFEDPDEVMEENPAAAAATVGAEEEGGEGGGGEEVIG. Residues 34 to 44 are compositionally biased toward low complexity; sequence ENPAAAAATVG. An SAM-dependent MTase PRMT-type domain is found at 66–387; sequence ADYYFDSYSH…VSRTQHYKMR (322 aa). His-79, Arg-88, Gly-112, Glu-134, and Glu-163 together coordinate S-adenosyl-L-methionine. Catalysis depends on residues Glu-178 and Glu-187.

This sequence belongs to the class I-like SAM-binding methyltransferase superfamily. Protein arginine N-methyltransferase family.

It localises to the nucleus. It carries out the reaction L-arginyl-[protein] + S-adenosyl-L-methionine = N(omega)-methyl-L-arginyl-[protein] + S-adenosyl-L-homocysteine + H(+). The enzyme catalyses L-arginyl-[protein] + 2 S-adenosyl-L-methionine = N(omega),N(omega)-dimethyl-L-arginyl-[protein] + 2 S-adenosyl-L-homocysteine + 2 H(+). In terms of biological role, arginine methyltransferase that methylates (mono and asymmetric dimethylation) the guanidino nitrogens of arginyl residues present in target proteins. This Oryza sativa subsp. indica (Rice) protein is Protein arginine N-methyltransferase 1 (PRMT1).